The chain runs to 692 residues: Ena/VASP-like protein (692 aa).

In terms of domain architecture, WH1 spans 1 to 112 (MSEQSICQAR…NAMLFALNIM (112 aa)). Disordered regions lie at residues 116-310 (DGGP…VQKN), 466-518 (SAAM…YEES), and 531-650 (KLRK…NDVS). Composition is skewed to polar residues over residues 123–132 (RQAQNIQNGP) and 159–169 (STTVSTLQINV). Low complexity predominate over residues 214 to 226 (SSKSTNKSSNRTS). The span at 231-267 (LQNSHCGSEPSTSQSSAFSPIRPSNGTVSRSIKQISL) shows a compositional bias: polar residues. Low complexity-rich tracts occupy residues 288-310 (PSLSFSPCSSSPPVSVTSSVQKN) and 466-479 (SAAMVASVGSAPAP). The span at 480–506 (ASGPPPPPPPGPPPPSGGTPPPAPPLP) shows a compositional bias: pro residues. Residues 522 to 542 (GLAAALAGAKLRKVQRPEDGS) form an EVH2 block A region. The EVH2 stretch occupies residues 522-689 (GLAAALAGAK…DAIRQELSRI (168 aa)). A KLKR motif is present at residues 531-534 (KLRK). Residues 563–580 (GGLMEEMNKLLAKRRKAA) are EVH2 block B. A compositionally biased stretch (polar residues) spans 597–617 (EDASLSSSPVTRGPTPQNSSD). The span at 618-628 (LGKKPWERSNS) shows a compositional bias: basic and acidic residues. Positions 655 to 689 (DFDRMKQEILEEVVRELHKVKEEIIDAIRQELSRI) are EVH2 block C.

It belongs to the Ena/VASP family. During embryonic and tadpole development, expressed in the cement gland, brain, neural tube, myotome and neural placodes, including the otic, lateral line and olfactory placodes. All isoforms show similar spatial expression patterns.

The protein resides in the cytoplasm. The protein localises to the cytoskeleton. It is found in the stress fiber. It localises to the cell projection. Its subcellular location is the lamellipodium. Ena/VASP proteins are actin-associated proteins involved in a range of processes dependent on cytoskeleton remodeling and cell polarity such as axon guidance and lamellipodial and filopodial dynamics in migrating cells. Evl enhances actin nucleation and polymerization. The sequence is that of Ena/VASP-like protein from Xenopus laevis (African clawed frog).